The primary structure comprises 568 residues: Pentatricopeptide repeat-containing protein At1g73400, mitochondrial (568 aa).

The N-terminal 55 residues, 1–55 (MMRRLVSYFVRSRFSLHLSTTPPQRSALFSHILSSHLDSIQINKKISSFSVHRFC), are a transit peptide targeting the mitochondrion. PPR repeat units lie at residues 233–263 (EINA…MRHR), 267–301 (DANT…GHKP), 302–336 (ENFT…GSAV), 340–374 (TAKT…GCLP), 375–409 (DVST…GYPP), 410–444 (DIVT…RCAP), 445–479 (SVQT…DCVQ), and 480–514 (DVET…GLKL).

It belongs to the PPR family. P subfamily.

It is found in the mitochondrion. The polypeptide is Pentatricopeptide repeat-containing protein At1g73400, mitochondrial (Arabidopsis thaliana (Mouse-ear cress)).